We begin with the raw amino-acid sequence, 90 residues long: Small ribosomal subunit protein bS16 (90 aa).

It belongs to the bacterial ribosomal protein bS16 family.

The protein is Small ribosomal subunit protein bS16 of Lactococcus lactis subsp. cremoris (strain MG1363).